The following is a 284-amino-acid chain: Tegument protein VP22 (284 aa).

Disordered regions lie at residues 1-126 and 239-284; these read MSYY…WSID and LYAS…SRRR. Positions 74-83 are enriched in basic and acidic residues; sequence SRDDDDRRQP. Over residues 94-108 the composition is skewed to basic residues; that stretch reads ERRKSQTTVTTRRKT. The segment covering 115-126 has biased composition (polar residues); the sequence is KSSNSNGPWSID.

This sequence belongs to the alphaherpesvirinae VP22 tegument protein family. In terms of assembly, interacts with gE (via C-terminus); this interaction is necessary for the recruitment of VP22 to the Golgi and its packaging into virions. Interacts with gM (via C-terminus). Interacts with VP16; this interaction allows the formation of a tripartite complex composed of VP16, VP22 and UL41/VHS. Interacts with the capsid-binding protein UL16. Interacts with host CGAS. In terms of processing, highly phosphorylated in the host cell. Packaging is selective for underphosphorylated forms.

It is found in the virion tegument. The protein localises to the host cytoplasm. The protein resides in the host nucleus. It localises to the host Golgi apparatus. Tegument protein that plays different roles during the time course of infection. Participates in both the accumulation of viral mRNAs and viral protein translation at late time of infection. Modulates the RNase activity of the virion host shutoff protein UL41 probably to ensure necessary levels of key cellular mRNAs and proteins. Plays a role in microtubule reorganization that occurs after viral infection by stabilizing microtubule network. Plays a role in the inhibition of host innate immune system by targeting the CGAS enzymatic activity which is the principal cytosolic DNA sensor that detects invading viral DNA. Acts by mediating disruption of liquid-like droplets in which CGAS is activated, thereby preventing CGAS activity. The chain is Tegument protein VP22 (UL49) from Amazona oratrix (yellow-headed parrot).